The following is a 316-amino-acid chain: CD-NTase-associated protein 12 (316 aa).

Positions 4–121 (RIFIGSSSEG…MLGITQTRYE (118 aa)) constitute a TIR domain. The tract at residues 161 to 316 (STVIAISYFE…ECVEIIEPQP (156 aa)) is STING domain. 3',3'-c-di-GMP-binding residues include F172, P237, and D253.

The protein in the C-terminal section; belongs to the bacterial STING family. In terms of assembly, forms homodimers; in the presence of c-di-GMP forms filaments with an ordered array of parallel-stacked subunits.

The catalysed reaction is NAD(+) + H2O = ADP-D-ribose + nicotinamide + H(+). With respect to regulation, NAD(+) hydrolase activity is strongly stimulated by c-di-GMP, weakly by 3'3'-cGAMP, very weakly by c-di-AMP but not at all by 2'3'-cGAMP. Self-association of TIR domains is required for NADase activity. Functionally, effector protein of a CBASS antiviral system with NAD(+) hydrolase activity. CBASS (cyclic oligonucleotide-based antiphage signaling system) provides immunity against bacteriophage. The CD-NTase protein synthesizes cyclic nucleotides in response to infection; these serve as specific second messenger signals. The signals activate a diverse range of effectors, leading to bacterial cell death and thus abortive phage infection. A type I-D(GG) CBASS system. Binds c-di-GMP (synthesized by the cognate CdnE encoded upstream in the same operon) but not c-di-AMP, 2'-3'-cGAMP, 3'-3'-cGAMP or cUMP-AMP (tested without the N-terminal TIR domain). Upon activation by c-di-GMP forms filaments which hydrolyze NAD(+); filament formation is required for enzyme activation. This Lachnospiraceae bacterium (strain RUG226) protein is CD-NTase-associated protein 12.